A 308-amino-acid polypeptide reads, in one-letter code: ADP,ATP carrier protein (308 aa).

3 Solcar repeats span residues 6-99 (KNFM…FKRM), 110-203 (KWFA…LKPV), and 211-297 (NNFL…LQVI). A run of 5 helical transmembrane segments spans residues 8–35 (FMVDFLAGGLSAAVSKTAAAPIERVKLL), 76–100 (TANVIRYFPTQALNFAFKDKFKRMF), 108–128 (YWKWFAGNMASGGAAGAVSLS), 179–200 (FNISCVGIVVYRGLYFGMYDSL), and 214–234 (LAAFLLGWGITIGAGLASYPI). ADP is bound by residues arginine 81 and lysine 93. Residue arginine 238 participates in ADP binding. The important for transport activity stretch occupies residues 238–243 (RRRMMM). A Nucleotide carrier signature motif motif is present at residues 238–243 (RRRMMM). The helical transmembrane segment at 274-294 (AGANILRAVAGAGVLAGYDQL) threads the bilayer.

It belongs to the mitochondrial carrier (TC 2.A.29) family. In terms of assembly, monomer.

Its subcellular location is the mitochondrion inner membrane. The catalysed reaction is ADP(in) + ATP(out) = ADP(out) + ATP(in). With respect to regulation, the matrix-open state (m-state) is inhibited by the membrane-permeable bongkrekic acid (BKA). The cytoplasmic-open state (c-state) is inhibited by the membrane-impermeable toxic inhibitor carboxyatractyloside (CATR). Functionally, ADP:ATP antiporter that mediates import of ADP into the mitochondrial matrix for ATP synthesis, and export of ATP out to fuel the cell. Cycles between the cytoplasmic-open state (c-state) and the matrix-open state (m-state): operates by the alternating access mechanism with a single substrate-binding site intermittently exposed to either the cytosolic (c-state) or matrix (m-state) side of the inner mitochondrial membrane. This Chlamydomonas reinhardtii (Chlamydomonas smithii) protein is ADP,ATP carrier protein (ABT).